The sequence spans 535 residues: CTP synthase (535 aa).

An amidoligase domain region spans residues 1–267 (MTKYIFVTGG…DQIVLDHFGV (267 aa)). Residue S13 coordinates CTP. Position 13 (S13) interacts with UTP. 14–19 (SLGKGI) contributes to the ATP binding site. Position 54 (Y54) interacts with L-glutamine. An ATP-binding site is contributed by D71. Residues D71 and E141 each contribute to the Mg(2+) site. Residues 148 to 150 (DIE), 188 to 193 (KTKPTQ), and K224 each bind CTP. Residues 188 to 193 (KTKPTQ) and K224 contribute to the UTP site. The Glutamine amidotransferase type-1 domain occupies 292–535 (KIALVGKYVA…VAAASREVKD (244 aa)). G354 provides a ligand contact to L-glutamine. C381 functions as the Nucleophile; for glutamine hydrolysis in the catalytic mechanism. L-glutamine-binding positions include 382 to 385 (LGMQ), E405, and R463. Catalysis depends on residues H508 and E510.

It belongs to the CTP synthase family. Homotetramer.

The catalysed reaction is UTP + L-glutamine + ATP + H2O = CTP + L-glutamate + ADP + phosphate + 2 H(+). It catalyses the reaction L-glutamine + H2O = L-glutamate + NH4(+). It carries out the reaction UTP + NH4(+) + ATP = CTP + ADP + phosphate + 2 H(+). It functions in the pathway pyrimidine metabolism; CTP biosynthesis via de novo pathway; CTP from UDP: step 2/2. With respect to regulation, allosterically activated by GTP, when glutamine is the substrate; GTP has no effect on the reaction when ammonia is the substrate. The allosteric effector GTP functions by stabilizing the protein conformation that binds the tetrahedral intermediate(s) formed during glutamine hydrolysis. Inhibited by the product CTP, via allosteric rather than competitive inhibition. In terms of biological role, catalyzes the ATP-dependent amination of UTP to CTP with either L-glutamine or ammonia as the source of nitrogen. Regulates intracellular CTP levels through interactions with the four ribonucleotide triphosphates. The polypeptide is CTP synthase (Levilactobacillus brevis (strain ATCC 367 / BCRC 12310 / CIP 105137 / JCM 1170 / LMG 11437 / NCIMB 947 / NCTC 947) (Lactobacillus brevis)).